A 34-amino-acid chain; its full sequence is MSDIN-like toxin proprotein 3 (34 aa).

A propeptide spanning residues 1-10 (MSDINTARLP) is cleaved from the precursor. Positions 11–20 (FFQPPEFRPP) form a cross-link, cyclopeptide (Phe-Pro). Positions 21–34 (CVGDDIEMVLTRGE) are excised as a propeptide.

It belongs to the MSDIN fungal toxin family. Processed by the macrocyclase-peptidase enzyme POPB to yield a toxic cyclic decapeptide. POPB first removes 10 residues from the N-terminus. Conformational trapping of the remaining peptide forces the enzyme to release this intermediate rather than proceed to macrocyclization. The enzyme rebinds the remaining peptide in a different conformation and catalyzes macrocyclization of the N-terminal 10 residues.

Functionally, probable toxin that belongs to the MSDIN-like toxin family responsible for a large number of food poisoning cases and deaths. The chain is MSDIN-like toxin proprotein 3 from Amanita bisporigera (Destroying angel).